A 257-amino-acid polypeptide reads, in one-letter code: MAHSQVGIQLISESTEKTLAELTALCAEHNIIHHEKSPLALVQTDERLELRKLDEPKLGAVYVDFVGGTMAHRRKFGGGRGEAVAKAVGIKGSELPTVIDATAGLGRDAFVLASIGCQVRLVERHPVVFLLLQDGLNRAYQDEEIGEMLQQNLCLLNVHHINELDPNSDYADVVYLDPMYPHKQKSALVKKEMRVFQHLVGADLDADELLLPALQLAKKRVVVKRPDYAEFLCGKQPHFSRETKNHRFDIYMGASQC.

S-adenosyl-L-methionine-binding positions include 107–108 (RD), 123–124 (ER), and Asp177.

Belongs to the methyltransferase superfamily. RsmJ family.

The protein localises to the cytoplasm. It carries out the reaction guanosine(1516) in 16S rRNA + S-adenosyl-L-methionine = N(2)-methylguanosine(1516) in 16S rRNA + S-adenosyl-L-homocysteine + H(+). Specifically methylates the guanosine in position 1516 of 16S rRNA. The sequence is that of Ribosomal RNA small subunit methyltransferase J from Haemophilus influenzae (strain PittEE).